Consider the following 209-residue polypeptide: Chloramphenicol acetyltransferase (209 aa).

H189 acts as the Proton acceptor in catalysis.

It belongs to the chloramphenicol acetyltransferase family. In terms of assembly, homotrimer.

The enzyme catalyses chloramphenicol + acetyl-CoA = chloramphenicol 3-acetate + CoA. This enzyme is an effector of chloramphenicol resistance in bacteria. In Staphylococcus aureus, this protein is Chloramphenicol acetyltransferase.